The chain runs to 171 residues: 3-hydroxydecanoyl-[acyl-carrier-protein] dehydratase (171 aa).

Residue His70 is part of the active site.

It belongs to the thioester dehydratase family. FabA subfamily. Homodimer.

The protein resides in the cytoplasm. It catalyses the reaction a (3R)-hydroxyacyl-[ACP] = a (2E)-enoyl-[ACP] + H2O. The catalysed reaction is (3R)-hydroxydecanoyl-[ACP] = (2E)-decenoyl-[ACP] + H2O. It carries out the reaction (2E)-decenoyl-[ACP] = (3Z)-decenoyl-[ACP]. It functions in the pathway lipid metabolism; fatty acid biosynthesis. Functionally, necessary for the introduction of cis unsaturation into fatty acids. Catalyzes the dehydration of (3R)-3-hydroxydecanoyl-ACP to E-(2)-decenoyl-ACP and then its isomerization to Z-(3)-decenoyl-ACP. Can catalyze the dehydratase reaction for beta-hydroxyacyl-ACPs with saturated chain lengths up to 16:0, being most active on intermediate chain length. The protein is 3-hydroxydecanoyl-[acyl-carrier-protein] dehydratase of Pseudomonas fluorescens (strain ATCC BAA-477 / NRRL B-23932 / Pf-5).